A 294-amino-acid chain; its full sequence is Tyrosine-protein phosphatase (294 aa).

Residues 1-24 (MKTHHANLALALMLGLSSSATAVA) form the signal peptide. Cys-182 (phosphocysteine intermediate) is an active-site residue. Composition is skewed to basic and acidic residues over residues 221 to 231 (QPKDSDERADH) and 238 to 247 (PGDRPQDGGH). Residues 221-252 (QPKDSDERADHGAGQAEPGDRPQDGGHGRYRA) form a disordered region.

The protein belongs to the protein-tyrosine phosphatase family. Monomer.

The enzyme catalyses O-phospho-L-tyrosyl-[protein] + H2O = L-tyrosyl-[protein] + phosphate. This Nostoc commune protein is Tyrosine-protein phosphatase (iphP).